We begin with the raw amino-acid sequence, 352 residues long: Histidinol-phosphate aminotransferase (352 aa).

An N6-(pyridoxal phosphate)lysine modification is found at K211.

The protein belongs to the class-II pyridoxal-phosphate-dependent aminotransferase family. Histidinol-phosphate aminotransferase subfamily. In terms of assembly, homodimer. Pyridoxal 5'-phosphate is required as a cofactor.

The catalysed reaction is L-histidinol phosphate + 2-oxoglutarate = 3-(imidazol-4-yl)-2-oxopropyl phosphate + L-glutamate. It participates in amino-acid biosynthesis; L-histidine biosynthesis; L-histidine from 5-phospho-alpha-D-ribose 1-diphosphate: step 7/9. This is Histidinol-phosphate aminotransferase from Haemophilus influenzae (strain PittGG).